A 475-amino-acid chain; its full sequence is Ribulose bisphosphate carboxylase large chain (475 aa).

Positions 1–2 (MS) are excised as a propeptide. An N-acetylproline modification is found at P3. At K14 the chain carries N6,N6,N6-trimethyllysine. Positions 123 and 173 each coordinate substrate. K175 functions as the Proton acceptor in the catalytic mechanism. K177 provides a ligand contact to substrate. Residues K201, D203, and E204 each contribute to the Mg(2+) site. At K201 the chain carries N6-carboxylysine. H294 (proton acceptor) is an active-site residue. Residues R295, H327, and S379 each contribute to the substrate site.

The protein belongs to the RuBisCO large chain family. Type I subfamily. In terms of assembly, heterohexadecamer of 8 large chains and 8 small chains; disulfide-linked. The disulfide link is formed within the large subunit homodimers. Mg(2+) is required as a cofactor. The disulfide bond which can form in the large chain dimeric partners within the hexadecamer appears to be associated with oxidative stress and protein turnover.

Its subcellular location is the plastid. It is found in the chloroplast. The enzyme catalyses 2 (2R)-3-phosphoglycerate + 2 H(+) = D-ribulose 1,5-bisphosphate + CO2 + H2O. It carries out the reaction D-ribulose 1,5-bisphosphate + O2 = 2-phosphoglycolate + (2R)-3-phosphoglycerate + 2 H(+). Functionally, ruBisCO catalyzes two reactions: the carboxylation of D-ribulose 1,5-bisphosphate, the primary event in carbon dioxide fixation, as well as the oxidative fragmentation of the pentose substrate in the photorespiration process. Both reactions occur simultaneously and in competition at the same active site. This is Ribulose bisphosphate carboxylase large chain from Spirogyra maxima (Green alga).